The chain runs to 547 residues: Chaperonin GroEL (547 aa).

Residues 30-33 (TLGP), K51, 87-91 (DGTTT), G415, and D495 each bind ATP. The interval 526–547 (QDATPTASPDMGGMGGMGGGMM) is disordered. The span at 537 to 547 (GGMGGMGGGMM) shows a compositional bias: gly residues.

This sequence belongs to the chaperonin (HSP60) family. In terms of assembly, forms a cylinder of 14 subunits composed of two heptameric rings stacked back-to-back. Interacts with the co-chaperonin GroES.

The protein localises to the cytoplasm. The catalysed reaction is ATP + H2O + a folded polypeptide = ADP + phosphate + an unfolded polypeptide.. Its function is as follows. Together with its co-chaperonin GroES, plays an essential role in assisting protein folding. The GroEL-GroES system forms a nano-cage that allows encapsulation of the non-native substrate proteins and provides a physical environment optimized to promote and accelerate protein folding. This is Chaperonin GroEL from Vesicomyosocius okutanii subsp. Calyptogena okutanii (strain HA).